Here is a 141-residue protein sequence, read N- to C-terminus: Nucleoside diphosphate kinase (141 aa).

ATP-binding residues include Lys-11, Phe-59, Arg-87, Thr-93, Arg-104, and Asn-114. His-117 (pros-phosphohistidine intermediate) is an active-site residue.

This sequence belongs to the NDK family. In terms of assembly, homotetramer. It depends on Mg(2+) as a cofactor.

The protein localises to the cytoplasm. The enzyme catalyses a 2'-deoxyribonucleoside 5'-diphosphate + ATP = a 2'-deoxyribonucleoside 5'-triphosphate + ADP. It catalyses the reaction a ribonucleoside 5'-diphosphate + ATP = a ribonucleoside 5'-triphosphate + ADP. In terms of biological role, major role in the synthesis of nucleoside triphosphates other than ATP. The ATP gamma phosphate is transferred to the NDP beta phosphate via a ping-pong mechanism, using a phosphorylated active-site intermediate. This Actinobacillus succinogenes (strain ATCC 55618 / DSM 22257 / CCUG 43843 / 130Z) protein is Nucleoside diphosphate kinase.